The sequence spans 306 residues: MVGKLPIMAETNENDLPVIDLAQIEGYVVDDSDEDDPVLLRPDGTPIETWREDFPYEERVTREDYEKVKRSLQIELLKWQNWTKETGQRHIILFEGRDAAGKGGTIKRFNEHLNPRGARTVALEKPSPRESTSWYFQRYIQHFPAAGEIVFFDRSWYNRSGVERVMGFCTESQHAEFLREVPMLENMILGSGISLTKFWFSVTRKEQRTRFAIRQVDPVRQWKLSPMDLASLDRWDDYTRAKEEQFRYTDTDESPWITIKSNDKKRARINAMRYVLSKFDYTDKDYELVGEPDPKVVLRGRDQIGD.

The protein belongs to the polyphosphate kinase 2 (PPK2) family. Class I subfamily. Homotetramer. It depends on Mn(2+) as a cofactor.

It catalyses the reaction [phosphate](n) + ATP = [phosphate](n+1) + ADP. It carries out the reaction [phosphate](n) + GTP = [phosphate](n+1) + GDP. Catalyzes the synthesis of polyP from ATP or GTP. Can also use inorganic polyphosphate (polyP) as a donor to convert ADP to ATP, but the activity is 10-fold higher in vitro for polyP synthesis than for ATP formation. The protein is Polyphosphate kinase PPK2B of Corynebacterium glutamicum (strain ATCC 13032 / DSM 20300 / JCM 1318 / BCRC 11384 / CCUG 27702 / LMG 3730 / NBRC 12168 / NCIMB 10025 / NRRL B-2784 / 534).